Here is a 399-residue protein sequence, read N- to C-terminus: Elongation factor Tu (399 aa).

A tr-type G domain is found at 10–204; sequence KPHVNIGTIG…AVDSSIPEPE (195 aa). The interval 19 to 26 is G1; that stretch reads GHVDHGKT. 19–26 provides a ligand contact to GTP; it reads GHVDHGKT. Position 26 (Thr26) interacts with Mg(2+). The interval 60–64 is G2; it reads GITIN. Residues 81–84 form a G3 region; sequence DCPG. Residues 81–85 and 136–139 contribute to the GTP site; these read DCPGH and NKCD. The segment at 136-139 is G4; the sequence is NKCD. Residues 174-176 are G5; it reads SGL.

This sequence belongs to the TRAFAC class translation factor GTPase superfamily. Classic translation factor GTPase family. EF-Tu/EF-1A subfamily. As to quaternary structure, monomer.

Its subcellular location is the cytoplasm. The catalysed reaction is GTP + H2O = GDP + phosphate + H(+). GTP hydrolase that promotes the GTP-dependent binding of aminoacyl-tRNA to the A-site of ribosomes during protein biosynthesis. In Synechococcus sp. (strain CC9605), this protein is Elongation factor Tu.